Reading from the N-terminus, the 347-residue chain is Magnesium-protoporphyrin IX monomethyl ester [oxidative] cyclase (347 aa).

This sequence belongs to the AcsF family. The cofactor is Fe cation.

It carries out the reaction Mg-protoporphyrin IX 13-monomethyl ester + 3 NADPH + 3 O2 + 2 H(+) = 3,8-divinyl protochlorophyllide a + 3 NADP(+) + 5 H2O. Its pathway is porphyrin-containing compound metabolism; chlorophyll biosynthesis (light-independent). Functionally, catalyzes the formation of the isocyclic ring in chlorophyll biosynthesis. Mediates the cyclase reaction, which results in the formation of divinylprotochlorophyllide (Pchlide) characteristic of all chlorophylls from magnesium-protoporphyrin IX 13-monomethyl ester (MgPMME). This Prochlorococcus marinus (strain SARG / CCMP1375 / SS120) protein is Magnesium-protoporphyrin IX monomethyl ester [oxidative] cyclase.